We begin with the raw amino-acid sequence, 170 residues long: Adenine phosphoribosyltransferase (170 aa).

This sequence belongs to the purine/pyrimidine phosphoribosyltransferase family. As to quaternary structure, homodimer.

The protein resides in the cytoplasm. It catalyses the reaction AMP + diphosphate = 5-phospho-alpha-D-ribose 1-diphosphate + adenine. It participates in purine metabolism; AMP biosynthesis via salvage pathway; AMP from adenine: step 1/1. Functionally, catalyzes a salvage reaction resulting in the formation of AMP, that is energically less costly than de novo synthesis. This Geobacillus thermodenitrificans (strain NG80-2) protein is Adenine phosphoribosyltransferase.